A 146-amino-acid polypeptide reads, in one-letter code: Large ribosomal subunit protein uL15 (146 aa).

Residues 1-46 form a disordered region; that stretch reads MLHQIKPFKGARKTVKRLGRGCGSGTGKTSGKGHKGQLARSGGGVR. Over residues 9-19 the composition is skewed to basic residues; that stretch reads KGARKTVKRLG. The segment covering 20–30 has biased composition (gly residues); that stretch reads RGCGSGTGKTS.

The protein belongs to the universal ribosomal protein uL15 family. As to quaternary structure, part of the 50S ribosomal subunit.

In terms of biological role, binds to the 23S rRNA. The sequence is that of Large ribosomal subunit protein uL15 from Phytoplasma mali (strain AT).